We begin with the raw amino-acid sequence, 68 residues long: Gallinacin-10 (68 aa).

A signal peptide spans 1-19; sequence MKILCLLFAVLLFLFQAAP. A propeptide spanning residues 20-25 is cleaved from the precursor; it reads GSADPL. 3 cysteine pairs are disulfide-bonded: C32–C61, C39–C54, and C44–C62.

This sequence belongs to the beta-defensin family. Strong expression in the testis, liver, gall bladder and kidney. Also expressed in the ovary and male and female reproductive tracts. Expressed in the ovarian stroma and the theca and granulosa layers of the ovarian follicle.

It is found in the secreted. It localises to the cytoplasmic granule. Has bactericidal activity. The chain is Gallinacin-10 (GAL10) from Gallus gallus (Chicken).